A 314-amino-acid chain; its full sequence is Serine acetyltransferase 1, chloroplastic (314 aa).

The protein belongs to the transferase hexapeptide repeat family. In terms of assembly, homomultimer. Interacts with OASA1 and CYP20-3. Component of the cysteine synthase complex (CSC) composed of two OAS-TL dimers and one SAT hexamer. In terms of tissue distribution, mostly expressed in leaves. Localized in cortex, trichomes and vascular tissues, particularly in phloem.

Its subcellular location is the plastid. It localises to the chloroplast. The protein localises to the cytoplasm. The catalysed reaction is L-serine + acetyl-CoA = O-acetyl-L-serine + CoA. Its pathway is amino-acid biosynthesis; L-cysteine biosynthesis; L-cysteine from L-serine: step 1/2. Serine acetyltransferase which catalyzes the formation of O-acetyl-L-serine from acetyl-CoA and L-serine. Also displays O-acetylserine (thio1)-lyase activity in vitro. May be involved in detoxification process by mediating the production of glutathione. This Arabidopsis thaliana (Mouse-ear cress) protein is Serine acetyltransferase 1, chloroplastic (SAT1).